A 393-amino-acid polypeptide reads, in one-letter code: Sugar efflux transporter B (393 aa).

12 helical membrane-spanning segments follow: residues Phe13–Leu33, Met52–Ala72, Leu84–Trp101, Tyr105–Pro124, Val152–Phe172, Val174–Leu194, Leu219–Met239, Leu253–Gly273, Leu283–His303, Leu308–Leu328, Leu344–Ala364, and Ile366–Cys386.

This sequence belongs to the major facilitator superfamily. Set transporter family.

Its subcellular location is the cell inner membrane. Functionally, involved in the efflux of sugars. The physiological role may be the detoxification of non-metabolizable sugar analogs. Can transport lactose and glucose. The sequence is that of Sugar efflux transporter B (setB) from Salmonella typhimurium (strain LT2 / SGSC1412 / ATCC 700720).